A 421-amino-acid chain; its full sequence is Imidazolonepropionase (421 aa).

2 residues coordinate Fe(3+): His80 and His82. Zn(2+)-binding residues include His80 and His82. Residues Arg89, Tyr152, and His185 each contribute to the 4-imidazolone-5-propanoate site. Tyr152 contributes to the N-formimidoyl-L-glutamate binding site. Residue His249 participates in Fe(3+) binding. His249 is a Zn(2+) binding site. Glu252 is a binding site for 4-imidazolone-5-propanoate. Position 324 (Asp324) interacts with Fe(3+). Asp324 serves as a coordination point for Zn(2+). N-formimidoyl-L-glutamate-binding residues include Asn326 and Gly328. Ser329 is a 4-imidazolone-5-propanoate binding site.

It belongs to the metallo-dependent hydrolases superfamily. HutI family. In terms of assembly, homodimer. Requires Zn(2+) as cofactor. Fe(3+) is required as a cofactor.

The protein resides in the cytoplasm. The catalysed reaction is 4-imidazolone-5-propanoate + H2O = N-formimidoyl-L-glutamate. It functions in the pathway amino-acid degradation; L-histidine degradation into L-glutamate; N-formimidoyl-L-glutamate from L-histidine: step 3/3. In terms of biological role, catalyzes the hydrolytic cleavage of the carbon-nitrogen bond in imidazolone-5-propanoate to yield N-formimidoyl-L-glutamate. It is the third step in the universal histidine degradation pathway. This chain is Imidazolonepropionase, found in Bacillus subtilis (strain 168).